The sequence spans 91 residues: Essential MCU regulator, mitochondrial (91 aa).

Residues 45–65 (VIPFGLLGVVLTVIPGLLIGA) form a helical membrane-spanning segment.

Belongs to the SMDT1/EMRE family.

Its subcellular location is the mitochondrion inner membrane. Functionally, essential regulatory subunit of the mitochondrial calcium uniporter (mcu) channel, a protein that mediates calcium uptake into mitochondria. The chain is Essential MCU regulator, mitochondrial from Aedes aegypti (Yellowfever mosquito).